A 344-amino-acid polypeptide reads, in one-letter code: MPALPVIDIRSNHVEDSLPEQIIKGLTSQPKTLPPLLFYSNEGLEHWNHHSRQPDFYPRRQEIEILKQGGNDIARSIAPSSVILDLGSANLEKVGYLLEALEAQEKDVLYFALDISAPQLATTLKEIPSSNFRHVRFAGLHGTFEDGLRWINETPEIRDLPHCVLLLGLTIGNFSRQNAAAFLQNIANHALTGASKNKSSILLSLDSCKVPTKVTRAYTSDGVVPFALQALTYAKALLCDRIDNGIDEKVLSCNLRPEHWHYLSEWNFALGRHEASLIPRFGDVCLGSMLQDIIVKKEEKVRFACSYKYDAKERQKLFLDSGVDQGMVWTNEGCDVAIYELKLA.

It belongs to the methyltransferase superfamily. As to quaternary structure, homodimer.

It carries out the reaction 4-(3-methylbut-2-enyl)-L-tryptophan + S-adenosyl-L-methionine = 4-(3-methylbut-2-enyl)-L-abrine + S-adenosyl-L-homocysteine + H(+). Its pathway is alkaloid biosynthesis; ergot alkaloid biosynthesis. Functionally, 4-dimethylallyltryptophan N-methyltransferase; part of the gene cluster that mediates the biosynthesis of fungal ergot alkaloid. DmaW catalyzes the first step of ergot alkaloid biosynthesis by condensing dimethylallyl diphosphate (DMAP) and tryptophan to form 4-dimethylallyl-L-tryptophan. The second step is catalyzed by the methyltransferase easF that methylates 4-dimethylallyl-L-tryptophan in the presence of S-adenosyl-L-methionine, resulting in the formation of 4-dimethylallyl-L-abrine. The catalase easC and the FAD-dependent oxidoreductase easE then transform 4-dimethylallyl-L-abrine to chanoclavine-I which is further oxidized by easD in the presence of NAD(+), resulting in the formation of chanoclavine-I aldehyde. Agroclavine dehydrogenase easG then mediates the conversion of chanoclavine-I aldehyde to agroclavine via a non-enzymatic adduct reaction: the substrate is an iminium intermediate that is formed spontaneously from chanoclavine-I aldehyde in the presence of glutathione. The presence of easA is not required to complete this reaction. Further conversion of agroclavine to paspalic acid is a two-step process involving oxidation of agroclavine to elymoclavine and of elymoclavine to paspalic acid, the second step being performed by the elymoclavine oxidase cloA. Paspalic acid is then further converted to D-lysergic acid. Ergopeptines are assembled from D-lysergic acid and three different amino acids by the D-lysergyl-peptide-synthetases composed each of a monomudular and a trimodular nonribosomal peptide synthetase subunit. LpsB and lpsC encode the monomodular subunits responsible for D-lysergic acid activation and incorporation into the ergopeptine backbone. LpsA1 and A2 subunits encode the trimodular nonribosomal peptide synthetase assembling the tripeptide portion of ergopeptines. LpsA1 is responsible for formation of the major ergopeptine, ergotamine, and lpsA2 for alpha-ergocryptine, the minor ergopeptine of the total alkaloid mixture elaborated by C.purpurea. D-lysergyl-tripeptides are assembled by the nonribosomal peptide synthetases and released as N-(D-lysergyl-aminoacyl)-lactams. Cyclolization of the D-lysergyl-tripeptides is performed by the Fe(2+)/2-ketoglutarate-dependent dioxygenase easH which introduces a hydroxyl group into N-(D-lysergyl-aminoacyl)-lactam at alpha-C of the aminoacyl residue followed by spontaneous condensation with the terminal lactam carbonyl group. This chain is 4-dimethylallyltryptophan N-methyltransferase easF, found in Claviceps purpurea (strain 20.1) (Ergot fungus).